Reading from the N-terminus, the 382-residue chain is Manganese peroxidase H4 (382 aa).

An N-terminal signal peptide occupies residues Met1–Ser24. Cystine bridges form between Cys27–Cys39, Cys38–Cys313, Cys57–Cys141, Cys277–Cys344, and Cys366–Cys373. 2 residues coordinate Mn(2+): Glu59 and Glu63. The active-site Proton acceptor is His70. Asp71, Gly86, Asp88, and Ser90 together coordinate Ca(2+). 2 N-linked (GlcNAc...) asparagine glycosylation sites follow: Asn100 and Asn155. Position 197 (His197) interacts with heme b. Residue Thr198 participates in Ca(2+) binding. Asp203 contacts Mn(2+). Positions 215, 217, 220, and 222 each coordinate Ca(2+). Asn241 is a glycosylation site (N-linked (GlcNAc...) asparagine).

The protein belongs to the peroxidase family. Ligninase subfamily. It depends on heme b as a cofactor. The cofactor is Ca(2+).

The protein localises to the secreted. The catalysed reaction is 2 Mn(2+) + H2O2 + 2 H(+) = 2 Mn(3+) + 2 H2O. Catalyzes the oxidation of Mn(2+) to Mn(3+). The latter, acting as a diffusible redox mediator, is capable of oxidizing a variety of lignin compounds. The chain is Manganese peroxidase H4 from Phanerodontia chrysosporium (White-rot fungus).